The chain runs to 204 residues: Protein PAXX (204 aa).

One can recognise a PISA domain in the interval Phe-37–Ala-79. Ser-134 is modified (phosphoserine). A disordered region spans residues Glu-143–Thr-204. Thr-145 carries the phosphothreonine modification. Phosphoserine is present on residues Ser-148 and Ser-152. A mediates interaction with XRCC5/Ku80 and XRCC6/Ku70 and association with the non-homologous end joining core complex region spans residues Gly-171–Thr-204. The short motif at Phe-190–Thr-204 is the XLM element.

It belongs to the XRCC4-XLF family. PAXX subfamily. In terms of assembly, homodimer. Interacts with the DNA-bound XRCC5/Ku80 and XRCC6/Ku70 heterodimer (Ku complex); the interaction is direct. Associated component of the non-homologous end joining (NHEJ) complex, composed of the core proteins PRKDC, LIG4, XRCC4, XRCC6/Ku70, XRCC5/Ku86 and NHEJ1/XLF. Interacts with POLL (DNA polymerase lambda); promoting POLL recruitment to double-strand breaks (DSBs) and stimulation of the end-filling activity of POLL. Post-translationally, phosphorylation may inhibit interaction with the DNA-bound XRCC5/Ku80 and XRCC6/Ku70 heterodimer (Ku complex).

The protein localises to the nucleus. Its subcellular location is the chromosome. It localises to the cytoplasm. In terms of biological role, non-essential DNA repair protein involved in DNA non-homologous end joining (NHEJ); participates in double-strand break (DSB) repair and V(D)J recombination. May act as a scaffold required for accumulation of the Ku heterodimer, composed of XRCC5/Ku80 and XRCC6/Ku70, at double-strand break sites and promote the assembly and/or stability of the NHEJ machinery. Involved in NHEJ by promoting the ligation of blunt-ended DNA ends. Together with NHEJ1/XLF, collaborates with DNA polymerase lambda (POLL) to promote joining of non-cohesive DNA ends. Constitutes a non-essential component of classical NHEJ: has a complementary but distinct function with NHEJ1/XLF in DNA repair. Able to restrict infection by herpesvirus 1 (HSV-1) via an unknown mechanism. The protein is Protein PAXX of Homo sapiens (Human).